Here is a 210-residue protein sequence, read N- to C-terminus: Large ribosomal subunit protein uL4 (210 aa).

The span at 44 to 54 shows a compositional bias: polar residues; sequence KRQGTASTLTR. The disordered stretch occupies residues 44–85; sequence KRQGTASTLTRSEVRGGGRKPYKQKGTGRARQGSIRTPLRPG. Positions 60 to 71 are enriched in basic residues; that stretch reads GGRKPYKQKGTG.

It belongs to the universal ribosomal protein uL4 family. As to quaternary structure, part of the 50S ribosomal subunit.

Functionally, one of the primary rRNA binding proteins, this protein initially binds near the 5'-end of the 23S rRNA. It is important during the early stages of 50S assembly. It makes multiple contacts with different domains of the 23S rRNA in the assembled 50S subunit and ribosome. Forms part of the polypeptide exit tunnel. This is Large ribosomal subunit protein uL4 from Prochlorococcus marinus (strain MIT 9301).